Consider the following 281-residue polypeptide: Oxidase pynE (281 aa).

This sequence belongs to the avfA family.

Its pathway is secondary metabolite biosynthesis. Oxidase; part of the gene cluster that mediates the biosynthesis of pyranonigrins, a family of antioxidative compounds. The first step of pyranonigrins biosynthesis is performed by the hybrid PKS-NRPS synthetase that condenses 6 malonyl-CoA units to an acetyl starter unit, to form a 1,3,5-trioxotetradecane-6,8-dienyl-ACP. The enoyl reductase (ER) domain of pynA is likely to be functional during the first two rounds of polyketide chain extension, to generate the saturated C-C bonds of the alkyl side chain. PynA subsequently forms the amide bond between the acyl chain and L-serine. Although pynA has a terminal reductase domain, it appears to require the thioesterase pynI for the release of the straight-chain intermediate from pynA via the formation of a tetramic acid pyranonigrin J. The methyltransferase pynC then coverts pyranonigrin J to pyranonigrin I via N-methylation. The FAD-dependent monooxygenase pynG catalyzes an epoxidation-mediated cyclization to form the dihydro-gamma-pyrone moiety, followed by pynD-catalyzed oxidation of the alcohol to the ketone and enolization to yield the characteristic tetramic acid-fused gamma-pyrone core of pyranonigrin H. Pyranonigrin H is substrate of pynH for dehydration-mediated exo-methylene formation from the serine side chain to produce pyranonigrin E, before the oxidase pynE reduces the exo-methylene of pyranonigrin E into a pendant methyl to form pyranonigrin G. The FAD-linked oxidoreductase pynB performs the reverse reaction and converts pyranonigrin G back to pyranonigrin E. In Aspergillus niger (strain ATCC MYA-4892 / CBS 513.88 / FGSC A1513), this protein is Oxidase pynE.